We begin with the raw amino-acid sequence, 513 residues long: MAEQVTLSRTQVCGILREELYQNDAFHQADTHIFIIMGASGDLAKKKIYPTIWWLFRDGLLPKETFIVGYARSQLTVDDIQKQSEPFFKATPEERPKLEEFFTRNSYVVGQYDDPASYKHLNSYINALHQGMQANHLFYLALPPTVYEAVTKNIQETCMSQTGFNRIIVEKPFGRDLQSSNQLSNHISSLFREDQIYRIDHYLDKEMVQNLMVLRFANRIFGPIWNGDNIVCVILTFKEPFGTEGRGGYFDEFGIIRDVMQSHLLQMLCLVAMEKPATTDSDDVRNEKVKVLKCISEVETDNVILGQYVGNPNGEGEAANGYLDDPTVPRGSTTATFAAAVLYVKNERWDGVPFILRCGKALNERKAEVRLQFRDIPGDIFHQKCKRNELVIRMQPNEAVYTTMMTKKPGMFFNPEESELDLTYGNKYKNVKLPGAYERLILDVFCGCQMHFVRTDELREGWRIFTPLLHKIEREKPQPFPYVYGSRGPTEADELMRRVGFQYKGTYKGTHKH.

A2 is modified (N-acetylalanine). The residue at position 8 (S8) is a Phosphoserine. Position 10 is a phosphothreonine (T10). Residues G38–K45 and R72 each bind NADP(+). K89 carries the N6-acetyllysine modification. Positions 147 and 171 each coordinate NADP(+). D-glucose 6-phosphate is bound by residues K171, H201–K205, E239, and D258. An N6-(2-hydroxyisobutyryl)lysine; alternate modification is found at K171. N6-acetyllysine; alternate is present on K171. H263 functions as the Proton acceptor in the catalytic mechanism. R357 contacts NADP(+). Positions 360 and 365 each coordinate D-glucose 6-phosphate. NADP(+) contacts are provided by K366, R370, and R393. Position 395 (Q395) interacts with D-glucose 6-phosphate. An NADP(+)-binding site is contributed by D421–T423. K432 carries the post-translational modification N6-acetyllysine. Residues R487 and Y503 each contribute to the NADP(+) site. Y503 is subject to Phosphotyrosine.

This sequence belongs to the glucose-6-phosphate dehydrogenase family. In terms of assembly, homotetramer; dimer of dimers. Interacts with SIRT2; the interaction is enhanced by H(2)O(2) treatment. In terms of processing, acetylated by ELP3; acetylation inhibits its homodimerization and enzyme activity. Deacetylated by SIRT2; deacetylation stimulates its enzyme activity. As to expression, testis.

Its subcellular location is the cytoplasm. The protein localises to the cytosol. The protein resides in the membrane. It catalyses the reaction D-glucose 6-phosphate + NADP(+) = 6-phospho-D-glucono-1,5-lactone + NADPH + H(+). It participates in carbohydrate degradation; pentose phosphate pathway; D-ribulose 5-phosphate from D-glucose 6-phosphate (oxidative stage): step 1/3. Functionally, catalyzes the rate-limiting step of the oxidative pentose-phosphate pathway, which represents a route for the dissimilation of carbohydrates besides glycolysis. The main function of this enzyme is to provide reducing power (NADPH) and pentose phosphates for fatty acid and nucleic acid synthesis. This Mus musculus (Mouse) protein is Glucose-6-phosphate 1-dehydrogenase 2 (G6pd2).